The following is a 174-amino-acid chain: CASP-like protein 4D2 (174 aa).

Residues 1–14 (MAPPPPSPPAVSLK) lie on the Cytoplasmic side of the membrane. Residues 15–35 (VLLLLLRVLTGVFLVIALIIL) form a helical membrane-spanning segment. The Extracellular portion of the chain corresponds to 36 to 60 (STNSVTIVSQGSALKFHFKDVYAYR). A helical membrane pass occupies residues 61–81 (YMLSAAVIGLVYAVIQLFFTI). Residues 82–97 (SEFATGVKNPFNYQLD) are Cytoplasmic-facing. Residues 98 to 118 (FYGDKLISYLVATGSAAGFGV) traverse the membrane as a helical segment. Residues 119 to 150 (TKDLKDTFLALVALDSTDPVDKFFSKGYASAS) are Extracellular-facing. A helical transmembrane segment spans residues 151–171 (LLLFAFICLAVLSVFSSFAMA). Over 172-174 (KRN) the chain is Cytoplasmic.

It belongs to the Casparian strip membrane proteins (CASP) family. In terms of assembly, homodimer and heterodimers.

Its subcellular location is the cell membrane. The protein is CASP-like protein 4D2 of Arabidopsis thaliana (Mouse-ear cress).